Consider the following 350-residue polypeptide: Selenide, water dikinase (350 aa).

Sec15 is an active-site residue. Position 15 (Sec15) is a non-standard amino acid, selenocysteine. ATP contacts are provided by residues Lys18 and 47–49 (HNE). Asp50 contacts Mg(2+). Residues Asp67, Asp90, and 138–140 (GHS) each bind ATP. Asp90 serves as a coordination point for Mg(2+). Position 227 (Asp227) interacts with Mg(2+).

The protein belongs to the selenophosphate synthase 1 family. Class I subfamily. In terms of assembly, homodimer. The cofactor is Mg(2+).

It carries out the reaction hydrogenselenide + ATP + H2O = selenophosphate + AMP + phosphate + 2 H(+). In terms of biological role, synthesizes selenophosphate from selenide and ATP. In Nitratidesulfovibrio vulgaris (strain DSM 19637 / Miyazaki F) (Desulfovibrio vulgaris), this protein is Selenide, water dikinase.